The chain runs to 299 residues: Serine/threonine-protein kinase 1 (299 aa).

One can recognise a Protein kinase domain in the interval 39–277 (IATKPMFEGG…FKGLVSHPWF (239 aa)). Residues 45 to 53 (FEGGRRNNV) and Lys66 contribute to the ATP site. The active-site Proton acceptor is Asp153.

This sequence belongs to the protein kinase superfamily. Ser/Thr protein kinase family.

The protein resides in the virion. It is found in the host cytoplasm. It catalyses the reaction L-seryl-[protein] + ATP = O-phospho-L-seryl-[protein] + ADP + H(+). The enzyme catalyses L-threonyl-[protein] + ATP = O-phospho-L-threonyl-[protein] + ADP + H(+). Its function is as follows. Essential for viral replication. It may mediate the virus progression through DNA replication. In African swine fever virus (isolate Pig/Kenya/KEN-50/1950) (ASFV), this protein is Serine/threonine-protein kinase 1.